A 217-amino-acid polypeptide reads, in one-letter code: MVCPSPLRECHPFLQRSFFPSFALSHRDIISTRACLNDNSPAFDRRYHWVWEEDRRCLNLGKTLASTIHHKGGNLSLQWQRGNTTTHIATRWDANKLLLARAILKEKRNILQDKTSVNVNVNKLIPIPKKKVLKNRAKSLLSIKSHVHFHLIPFINFFLLYHQIILSHSLFHISHLISFHFLFFSFLSFPLLSFILFPCFSLFLSSNSFSLASPFSS.

Transmembrane regions (helical) follow at residues 151–171 (LIPF…HSLF) and 177–197 (ISFH…FILF).

It localises to the mitochondrion membrane. This is an uncharacterized protein from Schizosaccharomyces pombe (strain 972 / ATCC 24843) (Fission yeast).